The following is a 335-amino-acid chain: Phosphate acyltransferase (335 aa).

The protein belongs to the PlsX family. In terms of assembly, homodimer. Probably interacts with PlsY.

The protein localises to the cytoplasm. It carries out the reaction a fatty acyl-[ACP] + phosphate = an acyl phosphate + holo-[ACP]. It participates in lipid metabolism; phospholipid metabolism. Functionally, catalyzes the reversible formation of acyl-phosphate (acyl-PO(4)) from acyl-[acyl-carrier-protein] (acyl-ACP). This enzyme utilizes acyl-ACP as fatty acyl donor, but not acyl-CoA. The protein is Phosphate acyltransferase of Alkaliphilus oremlandii (strain OhILAs) (Clostridium oremlandii (strain OhILAs)).